We begin with the raw amino-acid sequence, 513 residues long: MDEESLQTALRTYDAQLQQVELALGAGLDPSELADLRQLQGDLKELIELTEASLVSIRKSKLLAALDGERPVQEDAEPLAFQNAIVETAEVPVAPGAELETVPSRETGPGPTEPGQEEDDGEDEEGGAALSGRKVNAPYYSAWGTLEYHNAMVVGTEEADDGSPGVRVLYLYPTHKSLKPCPFFLEGKCRFQENCRFSHGQVVSVDELRPFQDPDLSSLQAGSACLAKRQDGLWYPARITDVDSGYYTVKFDSLLLKEAVVEGDSILPPLRTDPAGSSDSDGSDADDPSYARVVEPGAANPGTCSSAFAGWEVHTRGIGSRLLAKMGYEFGKGLGRRADGRVEPVHAVVLPRGKSLDQCAEILQKRTRAGQAGVSKPPKCRSRGSGPGGRPPPRSVFDFLNEKLKGGAPGAPEVGAAPPGRSGKEVYHASRSTKRALSLRLLQTEEKIEQTQRAIRGIQEALARNAGRHSVTTTQLQEKLAGAQRQLGQLRAQEAGLQREQRKADTHKKMTEF.

N-acetylmethionine is present on Met-1. The disordered stretch occupies residues 92–131; sequence PVAPGAELETVPSRETGPGPTEPGQEEDDGEDEEGGAALS. Over residues 115-126 the composition is skewed to acidic residues; it reads GQEEDDGEDEEG. A C3H1-type zinc finger spans residues 176-202; the sequence is KSLKPCPFFLEGKCRFQENCRFSHGQV. The tract at residues 267-298 is disordered; that stretch reads LPPLRTDPAGSSDSDGSDADDPSYARVVEPGA. 2 positions are modified to phosphoserine: Ser-278 and Ser-355. A G-patch domain is found at 315–361; it reads TRGIGSRLLAKMGYEFGKGLGRRADGRVEPVHAVVLPRGKSLDQCAE. 2 disordered regions span residues 367–394 and 493–513; these read TRAG…PPPR and QEAG…MTEF. The segment covering 497-513 has biased composition (basic and acidic residues); it reads LQREQRKADTHKKMTEF.

In terms of assembly, interacts with CHD4/Mi-2; the interaction is direct.

The protein resides in the nucleus. Its function is as follows. Transcription repressor that specifically binds the 5'-GGAG[GA]A[GA]A-3' consensus sequence. Represses transcription by recruiting the chromatin multiprotein complex NuRD to target promoters. Negatively regulates expression of EGFR, a gene involved in cell proliferation, survival and migration. Its ability to repress genes of the EGFR pathway suggest it may act as a tumor suppressor. The polypeptide is Zinc finger CCCH-type with G patch domain-containing protein (ZGPAT) (Ovis aries (Sheep)).